Consider the following 92-residue polypeptide: UPF0473 protein OB2006 (92 aa).

This sequence belongs to the UPF0473 family.

This Oceanobacillus iheyensis (strain DSM 14371 / CIP 107618 / JCM 11309 / KCTC 3954 / HTE831) protein is UPF0473 protein OB2006.